A 244-amino-acid chain; its full sequence is HTH-type transcriptional regulator RdgA (244 aa).

The HTH cro/C1-type domain occupies 9–62 (LKTARTAQGLSQKALGDMIGVSQAAIQKIEVGKASQTTKIVELSNNLRVRPEWL). A DNA-binding region (H-T-H motif) is located at residues 20-39 (QKALGDMIGVSQAAIQKIEV).

Its function is as follows. Regulates pectin lyase production in response to DNA damage. The sequence is that of HTH-type transcriptional regulator RdgA (rdgA) from Pectobacterium carotovorum subsp. carotovorum (Erwinia carotovora subsp. carotovora).